The following is a 142-amino-acid chain: Hemoglobin subunit alpha-1 (142 aa).

Positions 2-142 (LLSADDKKHI…VSTVLTSKYR (141 aa)) constitute a Globin domain. Histidine 59 provides a ligand contact to O2. Histidine 88 serves as a coordination point for heme b.

Belongs to the globin family. In terms of assembly, heterotetramer of two alpha chains and two beta chains. Red blood cells.

Functionally, involved in oxygen transport from the lung to the various peripheral tissues. This chain is Hemoglobin subunit alpha-1 (hba1), found in Xenopus laevis (African clawed frog).